The primary structure comprises 76 residues: Histone H2A (76 aa).

Residues 1–23 (MSGRGKTGGKARAKAKTRSSRAG) form a disordered region. N-acetylserine; in acipensins is present on Ser-2. N-acetylserine; in histone H2A is present on Ser-2. Phosphoserine; in histone H2A is present on Ser-2. Lys-6 carries the post-translational modification N6-(2-hydroxyisobutyryl)lysine. Lys-6 is modified (N6-acetyllysine; in histone H2A). Basic residues predominate over residues 7 to 19 (TGGKARAKAKTRS). An N6-(2-hydroxyisobutyryl)lysine; alternate modification is found at Lys-10. An N6-lactoyllysine; alternate modification is found at Lys-10. Lys-10 carries the N6-succinyllysine modification. Glycyl lysine isopeptide (Lys-Gly) (interchain with G-Cter in ubiquitin); in histone H2A cross-links involve residues Lys-14 and Lys-16. An N6-(2-hydroxyisobutyryl)lysine; alternate modification is found at Lys-37. An N6-(2-hydroxyisobutyryl)lysine mark is found at Lys-65 and Lys-66.

Belongs to the histone H2A family. The nucleosome is a histone octamer containing two molecules each of H2A, H2B, H3 and H4 assembled in one H3-H4 heterotetramer and two H2A-H2B heterodimers. The octamer wraps approximately 147 bp of DNA. Phosphorylation on Ser-2 is enhanced during mitosis. Phosphorylation on Ser-2 directly represses transcription.

Its subcellular location is the nucleus. The protein localises to the chromosome. Core component of nucleosome. Nucleosomes wrap and compact DNA into chromatin, limiting DNA accessibility to the cellular machineries which require DNA as a template. Histones thereby play a central role in transcription regulation, DNA repair, DNA replication and chromosomal stability. DNA accessibility is regulated via a complex set of post-translational modifications of histones, also called histone code, and nucleosome remodeling. Functionally, acipensins are antimicrobial peptides. Acipensins 1 and 2 have antibacterial activity against Gram-positive bacteria L.monocytogenes EGD (MIC are 1.1 uM and 1.0 uM, respectively) and S.aureus ATCC 33591 (MIC are 0.9 uM and 0.6 uM, respectively), against Gram-negative bacterium E.coli ML-35p (MIC are 0.7 uM and 0.3 uM, respectively) and antifungal activity against C.albicans 820 (MIC are 1.0 uM and 0.9 uM, respectively). Acipensin 6 has antibacterial activity against Gram-negative bacterium E.coli ML-35p (MIC=2.5 uM). Antimicrobial activity is reduced by high ionic strength. Acipensins 1, 2 and 6 have no hemolytic (up to 40 uM) or cytotoxic (up to 20 uM) effects on human cells in vitro. This Acipenser gueldenstaedtii (Russian sturgeon) protein is Histone H2A.